The primary structure comprises 271 residues: Dipeptidyl-peptidase 6 (271 aa).

2 SH3b domains span residues 1 to 64 and 72 to 140; these read MNAI…LFDD and QKAQ…HPKI. Residues 148 to 268 form the NlpC/P60 domain; sequence HAFRENVVQT…DLATTITAIG (121 aa). C178 (nucleophile) is an active-site residue. The active-site Proton acceptor is the H224. H236 is an active-site residue.

The protein belongs to the peptidase C40 family.

It localises to the cytoplasm. Functionally, involved in cell sporulation. Hydrolyzes gamma-D-Glu-L-(meso)A2pm linkages only in those peptide units that have a free N-terminal L-alanine. The protein is Dipeptidyl-peptidase 6 of Lysinibacillus sphaericus (Bacillus sphaericus).